A 336-amino-acid chain; its full sequence is DNA topoisomerase 1B (336 aa).

Residues 79 to 336 (EIHIQGAEKE…KSYRKDVLGE (258 aa)) enclose the Topo IB-type catalytic domain. Residue tyrosine 294 is the O-(3'-phospho-DNA)-tyrosine intermediate of the active site.

Belongs to the type IB topoisomerase family. In terms of assembly, monomer.

The protein resides in the virion. It catalyses the reaction ATP-independent breakage of single-stranded DNA, followed by passage and rejoining.. Its function is as follows. Releases the supercoiling and torsional tension of DNA introduced during the DNA replication and transcription by transiently cleaving and rejoining one strand of the DNA duplex. Introduces a single-strand break via transesterification at a target site in duplex DNA. The scissile phosphodiester is attacked by the catalytic tyrosine of the enzyme, resulting in the formation of a DNA-(3'-phosphotyrosyl)-enzyme intermediate and the expulsion of a 5'-OH DNA strand. The free DNA strand then undergoes passage around the unbroken strand thus removing DNA supercoils. Finally, in the religation step, the DNA 5'-OH attacks the covalent intermediate to expel the active-site tyrosine and restore the DNA phosphodiester backbone. Cleaves DNA after CCCTT sequence. The chain is DNA topoisomerase 1B (TOP1E) from Acanthamoeba polyphaga mimivirus (APMV).